A 274-amino-acid chain; its full sequence is Dermonecrotic toxin SdSicTox-betaIIB1biv (274 aa).

His5 is a catalytic residue. Mg(2+)-binding residues include Glu25 and Asp27. The Nucleophile role is filled by His41. 2 disulfides stabilise this stretch: Cys45–Cys51 and Cys47–Cys190. Residue Asp85 coordinates Mg(2+).

Belongs to the arthropod phospholipase D family. Class II subfamily. Mg(2+) is required as a cofactor. As to expression, expressed by the venom gland.

It localises to the secreted. It carries out the reaction an N-(acyl)-sphingosylphosphocholine = an N-(acyl)-sphingosyl-1,3-cyclic phosphate + choline. It catalyses the reaction an N-(acyl)-sphingosylphosphoethanolamine = an N-(acyl)-sphingosyl-1,3-cyclic phosphate + ethanolamine. The enzyme catalyses a 1-acyl-sn-glycero-3-phosphocholine = a 1-acyl-sn-glycero-2,3-cyclic phosphate + choline. The catalysed reaction is a 1-acyl-sn-glycero-3-phosphoethanolamine = a 1-acyl-sn-glycero-2,3-cyclic phosphate + ethanolamine. Dermonecrotic toxins cleave the phosphodiester linkage between the phosphate and headgroup of certain phospholipids (sphingolipid and lysolipid substrates), forming an alcohol (often choline) and a cyclic phosphate. This toxin acts on sphingomyelin (SM). It may also act on ceramide phosphoethanolamine (CPE), lysophosphatidylcholine (LPC) and lysophosphatidylethanolamine (LPE), but not on lysophosphatidylserine (LPS), and lysophosphatidylglycerol (LPG). It acts by transphosphatidylation, releasing exclusively cyclic phosphate products as second products. Induces dermonecrosis, hemolysis, increased vascular permeability, edema, inflammatory response, and platelet aggregation. The sequence is that of Dermonecrotic toxin SdSicTox-betaIIB1biv from Sicarius cf. damarensis (strain GJB-2008) (Six-eyed sand spider).